Here is a 262-residue protein sequence, read N- to C-terminus: MIDKSAFIHPTAIVEDGAVIGANAHIGPFCIVGPQVEIGEGTVLKSHVAVNGQTKIGRDNEIYQFASIGEVNQDLKYAGEPTRVEIGDRNRIRESVTIHRGTVQGGGLTKVGSDNLLMINAHVAHDCTVGNRCILANNATLAGHVSVDDFAIIGGMTAVHQFCIIGAHVMVGGCSGVAQDVPPYVIAQGNHATPFGVNIEGLKRRGFSREGLVAIRNAYKLLYRSGKTLDEAKLEIAELAEKHPEVKAFTEFFERSTRGPIR.

The protein belongs to the transferase hexapeptide repeat family. LpxA subfamily. In terms of assembly, homotrimer.

It localises to the cytoplasm. It catalyses the reaction a (3R)-hydroxyacyl-[ACP] + UDP-N-acetyl-alpha-D-glucosamine = a UDP-3-O-[(3R)-3-hydroxyacyl]-N-acetyl-alpha-D-glucosamine + holo-[ACP]. The protein operates within glycolipid biosynthesis; lipid IV(A) biosynthesis; lipid IV(A) from (3R)-3-hydroxytetradecanoyl-[acyl-carrier-protein] and UDP-N-acetyl-alpha-D-glucosamine: step 1/6. Its function is as follows. Involved in the biosynthesis of lipid A, a phosphorylated glycolipid that anchors the lipopolysaccharide to the outer membrane of the cell. The polypeptide is Acyl-[acyl-carrier-protein]--UDP-N-acetylglucosamine O-acyltransferase (Salmonella dublin (strain CT_02021853)).